Here is a 526-residue protein sequence, read N- to C-terminus: Cytochrome P450 4F5 (526 aa).

Cysteine 470 serves as a coordination point for heme.

It belongs to the cytochrome P450 family. It depends on heme as a cofactor. In terms of tissue distribution, high expression in liver and kidney. Lower expression in brain.

Its subcellular location is the endoplasmic reticulum membrane. It is found in the microsome membrane. It catalyses the reaction an organic molecule + reduced [NADPH--hemoprotein reductase] + O2 = an alcohol + oxidized [NADPH--hemoprotein reductase] + H2O + H(+). The sequence is that of Cytochrome P450 4F5 (Cyp4f5) from Rattus norvegicus (Rat).